A 467-amino-acid polypeptide reads, in one-letter code: MAAKLLLLLCLFSGLHARSRRVEEDENEDSPSNQKWVLAPKSQDTDVTLILNKLLREYDKKLRPDIGIKPTVIDVDIYVNSIGPVSSINMEYQIDIFFAQTWTDSRLRFNSTMKILTLNSNMVGLIWIPDTIFRNSKTAEAHWITTPNQLLRIWNDGKILYTLRLTINAECQLQLHNFPMDAHACPLTFSSYGYPKEEMIYRWRKNSVEAADQKSWRLYQFDFMGLRNTTEIVTTSAGDYVVMTIYFELSRRMGYFTIQTYIPCILTVVLSWVSFWIKKDATPARTTLGITTVLTMTTLSTIARKSLPRVSYVTAMDLFVTVCFLFVFAALMEYATLNYYSSCRKPTIRKKKTSLLHPDSTRWIPDRISLQAPSNYSLLDMRPPPPVMITLNNSMYWQEFEDTCVYECLDGKDCQSFFCCYEECKSGSWRRGRIHIDVSELDSYSRVFFPTSFLLFNLVYWVGYLYL.

The N-terminal stretch at 1 to 17 is a signal peptide; sequence MAAKLLLLLCLFSGLHA. Residues 18–256 are Extracellular-facing; the sequence is RSRRVEEDEN…FELSRRMGYF (239 aa). Asn-110 carries an N-linked (GlcNAc...) asparagine glycan. A disulfide bridge links Cys-171 with Cys-185. A glycan (N-linked (GlcNAc...) asparagine) is linked at Asn-228. Residues 257–277 form a helical membrane-spanning segment; it reads TIQTYIPCILTVVLSWVSFWI. The Cytoplasmic portion of the chain corresponds to 278–283; sequence KKDATP. A helical transmembrane segment spans residues 284–303; the sequence is ARTTLGITTVLTMTTLSTIA. Residues 304-311 are Extracellular-facing; sequence RKSLPRVS. A helical transmembrane segment spans residues 312–332; it reads YVTAMDLFVTVCFLFVFAALM. Over 333 to 446 the chain is Cytoplasmic; the sequence is EYATLNYYSS…DVSELDSYSR (114 aa). A helical transmembrane segment spans residues 447 to 467; the sequence is VFFPTSFLLFNLVYWVGYLYL.

Belongs to the ligand-gated ion channel (TC 1.A.9) family. Gamma-aminobutyric acid receptor (TC 1.A.9.5) subfamily. GABRG3 sub-subfamily. In terms of assembly, heteropentamer, formed by a combination of alpha (GABRA1-6), beta (GABRB1-3), gamma (GABRG1-3), delta (GABRD), epsilon (GABRE), rho (GABRR1-3), pi (GABRP) and theta (GABRQ) chains, each subunit exhibiting distinct physiological and pharmacological properties. May be palmitoylated. Expressed in brain.

Its subcellular location is the postsynaptic cell membrane. It is found in the cell membrane. The catalysed reaction is chloride(in) = chloride(out). Gamma subunit of the heteropentameric ligand-gated chloride channel gated by gamma-aminobutyric acid (GABA), a major inhibitory neurotransmitter in the brain. GABA-gated chloride channels, also named GABA(A) receptors (GABAAR), consist of five subunits arranged around a central pore and contain GABA active binding site(s) located at the alpha and beta subunit interface(s). When activated by GABA, GABAARs selectively allow the flow of chloride across the cell membrane down their electrochemical gradient. This Mus musculus (Mouse) protein is Gamma-aminobutyric acid receptor subunit gamma-3.